A 639-amino-acid chain; its full sequence is Elongation factor 4 (639 aa).

A tr-type G domain is found at 39–221 (TMIRNFCIIA…EIVRRVPAPV (183 aa)). Residues 51–56 (DHGKST) and 168–171 (NKID) contribute to the GTP site.

The protein belongs to the TRAFAC class translation factor GTPase superfamily. Classic translation factor GTPase family. LepA subfamily.

Its subcellular location is the cell membrane. The enzyme catalyses GTP + H2O = GDP + phosphate + H(+). Functionally, required for accurate and efficient protein synthesis under certain stress conditions. May act as a fidelity factor of the translation reaction, by catalyzing a one-codon backward translocation of tRNAs on improperly translocated ribosomes. Back-translocation proceeds from a post-translocation (POST) complex to a pre-translocation (PRE) complex, thus giving elongation factor G a second chance to translocate the tRNAs correctly. Binds to ribosomes in a GTP-dependent manner. The polypeptide is Elongation factor 4 (Frankia casuarinae (strain DSM 45818 / CECT 9043 / HFP020203 / CcI3)).